Consider the following 53-residue polypeptide: Sodium/potassium-transporting ATPase subunit gamma (53 aa).

The chain crosses the membrane as a helical span at residues 16-34 (GGLIFAALAFIVGLVIILS).

Belongs to the FXYD family. In terms of assembly, regulatory subunit of the sodium/potassium-transporting ATPase which is composed of a catalytic alpha subunit, an auxiliary non-catalytic beta subunit and an additional regulatory subunit. The N-terminus is blocked. As to expression, highest levels expressed in the kidney and spleen. Restricted to the basolateral membrane in renal epithelial cells and varies in its level of expression along the nephron.

The protein localises to the membrane. Its function is as follows. May be involved in forming the receptor site for cardiac glycoside binding or may modulate the transport function of the sodium ATPase. The sequence is that of Sodium/potassium-transporting ATPase subunit gamma (FXYD2) from Ovis aries (Sheep).